Consider the following 315-residue polypeptide: uncharacterized protein (315 aa).

The next 3 helical transmembrane spans lie at I19 to F39, T56 to F76, and P81 to I101. The span at E154–Q171 shows a compositional bias: polar residues. Residues E154–D214 are disordered. Basic and acidic residues predominate over residues G203 to D214.

The protein belongs to the ATPase C chain family.

Its subcellular location is the mitochondrion membrane. This is an uncharacterized protein from Arabidopsis thaliana (Mouse-ear cress).